Consider the following 226-residue polypeptide: Glutathione peroxidase 3 (226 aa).

A signal peptide spans 1–24 (MARILRASCLLSLLLAGFVPPGRG). Sec73 is an active-site residue. Residue Sec73 is a non-standard amino acid, selenocysteine.

This sequence belongs to the glutathione peroxidase family. As to quaternary structure, homotetramer. As to expression, secreted in plasma.

The protein resides in the secreted. It carries out the reaction 2 glutathione + H2O2 = glutathione disulfide + 2 H2O. The catalysed reaction is tert-butyl hydroperoxide + 2 glutathione = tert-butanol + glutathione disulfide + H2O. Its function is as follows. Protects cells and enzymes from oxidative damage, by catalyzing the reduction of hydrogen peroxide, lipid peroxides and organic hydroperoxide, by glutathione. The protein is Glutathione peroxidase 3 of Mus musculus (Mouse).